The chain runs to 33 residues: Brevinin 2AV (33 aa).

C27 and C33 are disulfide-bonded.

Expressed by the skin glands.

Its subcellular location is the secreted. Functionally, has antibacterial activity. The polypeptide is Brevinin 2AV (Rana arvalis (Moor frog)).